Reading from the N-terminus, the 368-residue chain is Probable protein phosphatase 2C 58 (368 aa).

In terms of domain architecture, PPM-type phosphatase spans 23-329 (KFGLSSMQGW…DNMTMILVQF (307 aa)). Residues Asp57, Gly58, Asp272, and Asp320 each contribute to the Mn(2+) site. A disordered region spans residues 336 to 368 (NKNVSPAEQSAADKQPTGDTHWSEIHVTEESSS). Residues 356 to 368 (HWSEIHVTEESSS) are compositionally biased toward basic and acidic residues.

This sequence belongs to the PP2C family. Mg(2+) is required as a cofactor. The cofactor is Mn(2+).

It catalyses the reaction O-phospho-L-seryl-[protein] + H2O = L-seryl-[protein] + phosphate. The catalysed reaction is O-phospho-L-threonyl-[protein] + H2O = L-threonyl-[protein] + phosphate. In Oryza sativa subsp. japonica (Rice), this protein is Probable protein phosphatase 2C 58.